A 324-amino-acid chain; its full sequence is NADH-ubiquinone oxidoreductase chain 1 (324 aa).

8 consecutive transmembrane segments (helical) span residues Leu-9–Leu-29, Leu-76–Pro-96, Leu-106–Gly-126, Ile-146–Tyr-166, Ala-177–Ala-197, Leu-228–Phe-248, Glu-259–Val-279, and Phe-299–Gly-319.

This sequence belongs to the complex I subunit 1 family.

The protein resides in the mitochondrion inner membrane. The enzyme catalyses a ubiquinone + NADH + 5 H(+)(in) = a ubiquinol + NAD(+) + 4 H(+)(out). Functionally, core subunit of the mitochondrial membrane respiratory chain NADH dehydrogenase (Complex I) that is believed to belong to the minimal assembly required for catalysis. Complex I functions in the transfer of electrons from NADH to the respiratory chain. The immediate electron acceptor for the enzyme is believed to be ubiquinone. The chain is NADH-ubiquinone oxidoreductase chain 1 (MT-ND1) from Formosania lacustris (Oriental stream loach).